We begin with the raw amino-acid sequence, 140 residues long: Acyl-coenzyme A thioesterase PaaI (140 aa).

As to quaternary structure, homotetramer.

It participates in aromatic compound metabolism; phenylacetate degradation. In terms of biological role, thioesterase with a preference for ring-hydroxylated phenylacetyl-CoA esters. Hydrolyzes 3,4-dihydroxyphenylacetyl-CoA, 3-hydroxyphenylacetyl-CoA and 4-hydroxyphenylacetyl-CoA. Inactive towards 4-hydroxybenzoyl-CoA and 4-hydroxyphenacyl-CoA. This is Acyl-coenzyme A thioesterase PaaI (paaI) from Escherichia coli (strain K12).